The primary structure comprises 318 residues: Methionyl-tRNA formyltransferase (318 aa).

(6S)-5,6,7,8-tetrahydrofolate is bound at residue 112 to 115 (SILP).

It belongs to the Fmt family.

It catalyses the reaction L-methionyl-tRNA(fMet) + (6R)-10-formyltetrahydrofolate = N-formyl-L-methionyl-tRNA(fMet) + (6S)-5,6,7,8-tetrahydrofolate + H(+). In terms of biological role, attaches a formyl group to the free amino group of methionyl-tRNA(fMet). The formyl group appears to play a dual role in the initiator identity of N-formylmethionyl-tRNA by promoting its recognition by IF2 and preventing the misappropriation of this tRNA by the elongation apparatus. This is Methionyl-tRNA formyltransferase from Shewanella sp. (strain W3-18-1).